The following is a 148-amino-acid chain: Protein F15 (148 aa).

The protein belongs to the poxviridae F15 protein family.

This is Protein F15 from Fowlpox virus (strain NVSL) (FPV).